Reading from the N-terminus, the 54-residue chain is Ribulose bisphosphate carboxylase large chain (54 aa).

Residues methionine 1–serine 2 constitute a propeptide that is removed on maturation. Proline 3 carries the post-translational modification N-acetylproline. N6,N6,N6-trimethyllysine is present on lysine 14.

This sequence belongs to the RuBisCO large chain family. Type I subfamily. As to quaternary structure, heterohexadecamer of 8 large chains and 8 small chains.

It is found in the plastid. The protein localises to the chloroplast. It carries out the reaction 2 (2R)-3-phosphoglycerate + 2 H(+) = D-ribulose 1,5-bisphosphate + CO2 + H2O. It catalyses the reaction D-ribulose 1,5-bisphosphate + O2 = 2-phosphoglycolate + (2R)-3-phosphoglycerate + 2 H(+). Its function is as follows. RuBisCO catalyzes two reactions: the carboxylation of D-ribulose 1,5-bisphosphate, the primary event in carbon dioxide fixation, as well as the oxidative fragmentation of the pentose substrate in the photorespiration process. Both reactions occur simultaneously and in competition at the same active site. This is Ribulose bisphosphate carboxylase large chain (rbcL) from Geum borisii (Avens).